The primary structure comprises 317 residues: Putrescine transport system permease protein PotH (317 aa).

At 1–31 the chain is on the cytoplasmic side; it reads MSTLEPAAQSKPPGGFKLWLSQLQMKHGRKL. Residues 32–51 traverse the membrane as a helical segment; sequence VIALPYIWLILLFLLPFLIV. Topologically, residues 52–104 are periplasmic; sequence FKISLAEMARAIPPYTELMEWADGQLSITLNLGNFLQLTDDPLYFDAYLQSLQ. Positions 99–305 constitute an ABC transmembrane type-1 domain; sequence YLQSLQVAAI…LLLIVPIMWF (207 aa). A helical membrane pass occupies residues 105 to 124; that stretch reads VAAISTFCCLLIGYPLAWAV. Residues 125–133 lie on the Cytoplasmic side of the membrane; sequence AHSKPSTRN. The helical transmembrane segment at 134 to 153 threads the bilayer; sequence ILLLLVILPSWTSFLIRVYA. The Periplasmic portion of the chain corresponds to 154 to 184; that stretch reads WMGILKNNGVLNNFLLWLGVIDQPLTILHTN. A helical membrane pass occupies residues 185–204; the sequence is LAVYIGIVYAYVPFMVLPIY. The Cytoplasmic segment spans residues 205–239; it reads TALIRIDYSLVEAALDLGARPLKTFFTVIVPLTKG. Residues 240–259 traverse the membrane as a helical segment; sequence GIIAGSMLVFIPAVGEFVIP. Residues 260 to 284 lie on the Periplasmic side of the membrane; that stretch reads ELLGGPDSIMIGRVLWQEFFNNRDW. Residues 285-304 form a helical membrane-spanning segment; sequence PVASAVAIIMLLLLIVPIMW. The Cytoplasmic segment spans residues 305–317; that stretch reads FHKHQQKSVGEHG.

This sequence belongs to the binding-protein-dependent transport system permease family. CysTW subfamily. As to quaternary structure, the complex is composed of two ATP-binding proteins (PotG), two transmembrane proteins (PotH and PotI) and a solute-binding protein (PotF).

Its subcellular location is the cell inner membrane. Transport is feedback inhibited by intracellular polyamines. Its function is as follows. Part of the ABC transporter complex PotFGHI involved in putrescine uptake. Responsible for the translocation of the substrate across the membrane. Imports putrescine for maintenance of the optimal concentration of polyamines necessary for cell growth in the presence of glucose. In Escherichia coli (strain K12), this protein is Putrescine transport system permease protein PotH.